The sequence spans 602 residues: Probable translation initiation factor IF-2 (602 aa).

The tr-type G domain occupies 10–227 (LRQPIVVVLG…LLAGLTQNYM (218 aa)). Positions 19 to 26 (GHVDHGKT) are G1. 19 to 26 (GHVDHGKT) serves as a coordination point for GTP. Residues 44–48 (EMTQE) form a G2 region. Residues 83-86 (DTPG) form a G3 region. Residues 83-87 (DTPGH) and 137-140 (NKID) contribute to the GTP site. Residues 137–140 (NKID) are G4. Residues 205 to 207 (SAK) are G5.

Belongs to the TRAFAC class translation factor GTPase superfamily. Classic translation factor GTPase family. IF-2 subfamily.

Function in general translation initiation by promoting the binding of the formylmethionine-tRNA to ribosomes. Seems to function along with eIF-2. The polypeptide is Probable translation initiation factor IF-2 (Sulfurisphaera tokodaii (strain DSM 16993 / JCM 10545 / NBRC 100140 / 7) (Sulfolobus tokodaii)).